We begin with the raw amino-acid sequence, 55 residues long: Large ribosomal subunit protein bL33 (55 aa).

Belongs to the bacterial ribosomal protein bL33 family.

The protein is Large ribosomal subunit protein bL33 of Methylobacterium radiotolerans (strain ATCC 27329 / DSM 1819 / JCM 2831 / NBRC 15690 / NCIMB 10815 / 0-1).